The chain runs to 74 residues: Large ribosomal subunit protein bL31 (74 aa).

Zn(2+)-binding residues include Cys-16, Cys-18, Cys-38, and Cys-41.

This sequence belongs to the bacterial ribosomal protein bL31 family. Type A subfamily. Part of the 50S ribosomal subunit. It depends on Zn(2+) as a cofactor.

In terms of biological role, binds the 23S rRNA. In Acinetobacter baumannii (strain AB307-0294), this protein is Large ribosomal subunit protein bL31.